The primary structure comprises 258 residues: Mediator of RNA polymerase II transcription subunit 7 (258 aa).

Disordered regions lie at residues 1–39 (MLPG…PPPH) and 202–243 (EKET…PPSV). Residues 203–217 (KETEEDEEMKEDDEE) show a composition bias toward acidic residues. Residues 220-229 (STSSSEGNQK) are compositionally biased toward polar residues.

The protein belongs to the Mediator complex subunit 7 family. As to quaternary structure, component of the Mediator complex.

It is found in the nucleus. Component of the Mediator complex, a coactivator involved in the regulated transcription of nearly all RNA polymerase II-dependent genes. Mediator functions as a bridge to convey information from gene-specific regulatory proteins to the basal RNA polymerase II transcription machinery. Mediator is recruited to promoters by direct interactions with regulatory proteins and serves as a scaffold for the assembly of a functional preinitiation complex with RNA polymerase II and the general transcription factors. The protein is Mediator of RNA polymerase II transcription subunit 7 (let-49) of Caenorhabditis briggsae.